The primary structure comprises 610 residues: MIQVLLVTISLAVFPYQGSSVILESGNVNDYEVVYPRKVTALPKGAVQPKYEDTMQYEFKVNGEPVVLHLEKNKGLFSEDYSETHYSPDGREITTYPTVEDHCYYHGRIENDADSTASISACNGLKGHFKLQGEMYLIEPLKLPDSEAHAVFKYENVEKEDEAPKMCGVTQNWESYEPIKKASQSNLTPEQQRYLNAKKYVKLFLVADYIMYLKYGRNLTAVRTRMYDIVNVITPIYHRMNIHVALVGLEIWSNTDKIIVQSSADVTLNLFGNWRATDLLRRKSHDNAQLLTGINFNGPTAGLAYLGGICNTMYSAGIVQDHSKIHHLVAIAMAHEMGHNLGMDHDKDTCTCGTRPCVMAGALSCEASFLFSDCSQKDHREFLIKNMPQCILKKPLKTDVVSPAVCGNYFVEVGEECDCGSPRTCRDPCCDATTCKLRQGAQCAEGLCCDQCRFKGAGTECRAAKDECDMADVCTGRSAECTDSFQRNGQPCKNNNGYCYNGKCPIMADQCIALFGPSATVSQDACFQFNREGNHYGYCRKEQNTKIACEPQDVKCGRLYCFPNSPENKNPCNIYYSPNDEDKGMVLPGTKCADGKACSNGQCVDVTTPY.

Residues 1–20 form the signal peptide; sequence MIQVLLVTISLAVFPYQGSS. The propeptide occupies 21–189; it reads VILESGNVND…KKASQSNLTP (169 aa). The Peptidase M12B domain occupies 199–395; that stretch reads KYVKLFLVAD…NMPQCILKKP (197 aa). An N-linked (GlcNAc...) asparagine glycan is attached at Asn-218. Residue Asp-286 participates in Ca(2+) binding. 3 cysteine pairs are disulfide-bonded: Cys-310-Cys-390, Cys-350-Cys-374, and Cys-352-Cys-357. Position 335 (His-335) interacts with Zn(2+). Glu-336 is a catalytic residue. Zn(2+) contacts are provided by His-339 and His-345. Residues Cys-390, Val-405, Asn-408, Phe-410, Glu-412, Glu-415, and Asp-418 each contribute to the Ca(2+) site. One can recognise a Disintegrin domain in the interval 403-488; it reads PAVCGNYFVE…AECTDSFQRN (86 aa). 14 cysteine pairs are disulfide-bonded: Cys-406–Cys-435, Cys-417–Cys-430, Cys-419–Cys-425, Cys-429–Cys-452, Cys-443–Cys-449, Cys-448–Cys-474, Cys-461–Cys-481, Cys-468–Cys-499, Cys-492–Cys-504, Cys-511–Cys-561, Cys-526–Cys-572, Cys-539–Cys-549, Cys-556–Cys-598, and Cys-592–Cys-603. The D/ECD-tripeptide signature appears at 467–469; the sequence is ECD.

The protein belongs to the venom metalloproteinase (M12B) family. P-III subfamily. It depends on Zn(2+) as a cofactor. In terms of tissue distribution, expressed by the venom gland.

It is found in the secreted. Functionally, snake venom metalloproteinase that impairs hemostasis in the envenomed animal. In Crotalus adamanteus (Eastern diamondback rattlesnake), this protein is Zinc metalloproteinase-disintegrin-like 4a.